The chain runs to 332 residues: L-lactate dehydrogenase A chain (332 aa).

The residue at position 2 (alanine 2) is an N-acetylalanine. Lysine 5 bears the N6-acetyllysine; alternate mark. Lysine 5 carries the post-translational modification N6-succinyllysine; alternate. The residue at position 14 (lysine 14) is an N6-acetyllysine. Position 29–57 (29–57 (GAVGMACAISILMKDLADEVALVDVMEDK)) interacts with NAD(+). Position 57 is an N6-acetyllysine; alternate (lysine 57). A Glycyl lysine isopeptide (Lys-Gly) (interchain with G-Cter in SUMO2); alternate cross-link involves residue lysine 57. Residue lysine 81 is modified to N6-acetyllysine. Substrate is bound at residue arginine 106. The residue at position 118 (lysine 118) is an N6-acetyllysine; alternate. At lysine 118 the chain carries N6-succinyllysine; alternate. N6-acetyllysine is present on lysine 126. Asparagine 138 contributes to the NAD(+) binding site. Residues asparagine 138 and arginine 169 each coordinate substrate. The active-site Proton acceptor is histidine 193. 2 positions are modified to N6-acetyllysine: lysine 224 and lysine 232. Residue tyrosine 239 is modified to Phosphotyrosine. Lysine 243 is subject to N6-acetyllysine. Threonine 248 is a substrate binding site. A Phosphothreonine modification is found at threonine 309. At lysine 318 the chain carries N6-acetyllysine; alternate. N6-succinyllysine; alternate is present on lysine 318. The residue at position 322 (threonine 322) is a Phosphothreonine.

The protein belongs to the LDH/MDH superfamily. LDH family. Homotetramer. Interacts with PTEN upstream reading frame protein MP31. ISGylated.

It localises to the cytoplasm. It carries out the reaction (S)-lactate + NAD(+) = pyruvate + NADH + H(+). It functions in the pathway fermentation; pyruvate fermentation to lactate; (S)-lactate from pyruvate: step 1/1. Interconverts simultaneously and stereospecifically pyruvate and lactate with concomitant interconversion of NADH and NAD(+). The polypeptide is L-lactate dehydrogenase A chain (LDHA) (Bos mutus grunniens (Wild yak)).